The sequence spans 836 residues: Zinc fingers and homeoboxes protein 2 (836 aa).

Positions 24-58 are disordered; it reads LEEADRAKDKGLGVPPSDVSKERWAAEPEPSSKES. The interval 27-77 is interaction with EFNB1; that stretch reads ADRAKDKGLGVPPSDVSKERWAAEPEPSSKESEVVEVRSVGESQSKKLQGG. A compositionally biased stretch (basic and acidic residues) spans 42-58; the sequence is VSKERWAAEPEPSSKES. 2 C2H2-type zinc fingers span residues 78–101 and 110–133; these read YECKYCPYSTQNLNEFTEHVDMQH and YVCAECNFTTKKYDSLSDHNSKFH. Residues 168 to 210 form a disordered region; the sequence is SAPGSSDNDPGVSVGKTATVKTGKQKADAKKVPKKPDEAAPDN. A compositionally biased stretch (basic and acidic residues) spans 192–210; sequence QKADAKKVPKKPDEAAPDN. Residues 195–358 form a required for homodimerization region; that stretch reads DAKKVPKKPD…PAQLTPTKVS (164 aa). 4 consecutive DNA-binding regions (homeobox) follow at residues 263–324, 439–501, 530–591, and 628–690; these read NTTK…WSPE, TPAS…IVHI, AQKF…EQAV, and SPSS…TLSW. Residues 263–446 are required for repressor activity; that stretch reads NTTKYNSALD…PLTPASDRKK (184 aa). The segment at 263-497 is required for interaction with NFYA; the sequence is NTTKYNSALD…SDHRYRCQRG (235 aa). The segment at 317–446 is required for nuclear localization; that stretch reads HGISWSPEEV…PLTPASDRKK (130 aa). The segment at 404–442 is disordered; sequence GQKRPLVTPQAAPEPKRPHIAQVPEPPPKVANTPLTPAS. K455 participates in a covalent cross-link: Glycyl lysine isopeptide (Lys-Gly) (interchain with G-Cter in SUMO2). 2 stretches are compositionally biased toward basic and acidic residues: residues 700–709 and 730–746; these read SDDHGHDVAS and YAKDPKALGEEESEKLV. Residues 700–836 form a disordered region; sequence SDDHGHDVAS…DSTPAEAGQA (137 aa). Phosphoserine is present on residues S824 and S826.

The protein belongs to the ZHX family. In terms of assembly, homodimer (via homeobox domain 1). Heterodimer with ZHX1 (via homeobox domain 1). Heterodimer with ZHX3 (via homeobox domain 1). Heterodimerization with ZHX1 is not necessary for repressor activity. Interacts (via homeobox domain) with NFYA (via N-terminus). Interacts with EFNB1 intracellular domain peptide; the interaction enhances ZHX2 transcriptional repression activity.

It localises to the nucleus. Acts as a transcriptional repressor. Represses the promoter activity of the CDC25C gene stimulated by NFYA. May play a role in retinal development where it regulates the composition of bipolar cell populations, by promoting differentiation of bipolar OFF-type cells. In the brain, may promote maintenance and suppress differentiation of neural progenitor cells in the developing cortex. The chain is Zinc fingers and homeoboxes protein 2 (Zhx2) from Rattus norvegicus (Rat).